A 613-amino-acid chain; its full sequence is Metacaspase-1 (613 aa).

Catalysis depends on residues H404 and C460.

This sequence belongs to the peptidase C14B family. As to quaternary structure, monomer.

Its activity is regulated as follows. Activated by Ca(2+). In terms of biological role, cysteine protease that cleaves specifically after arginine or lysine residues. May play a role in apoptosis. This is Metacaspase-1 from Plasmodium falciparum (isolate 3D7).